Here is a 90-residue protein sequence, read N- to C-terminus: Barrier-to-autointegration factor-like protein (90 aa).

The protein belongs to the BAF family. In terms of assembly, homodimer. Heterodimerizes with BANF1. In terms of tissue distribution, expressed strongly in testis and pancreas. Also detected in brain, colon, liver, lung, ovary, placenta, prostate, small intestine, spleen and thymus. Not detected in heart, kidney and skeletal muscle.

It is found in the nucleus. Its subcellular location is the cytoplasm. Its function is as follows. May play a role in BANF1 regulation and influence tissue-specific roles of BANF1. This chain is Barrier-to-autointegration factor-like protein (BANF2), found in Homo sapiens (Human).